The following is a 191-amino-acid chain: Protein Ves (191 aa).

The protein belongs to the Ves family.

This Escherichia coli (strain K12 / MC4100 / BW2952) protein is Protein Ves.